We begin with the raw amino-acid sequence, 532 residues long: Apolipoprotein N-acyltransferase (532 aa).

Transmembrane regions (helical) follow at residues Ile-37 to Ala-57, Trp-75 to Val-95, Leu-106 to Ala-126, Leu-128 to Glu-148, Val-179 to Leu-199, and Thr-207 to Leu-227. The CN hydrolase domain maps to Val-245 to Ser-494. The Proton acceptor role is filled by Glu-289. Lys-353 is an active-site residue. Cys-406 serves as the catalytic Nucleophile. The helical transmembrane segment at Gly-505 to Leu-525 threads the bilayer.

It belongs to the CN hydrolase family. Apolipoprotein N-acyltransferase subfamily.

The protein localises to the cell inner membrane. It catalyses the reaction N-terminal S-1,2-diacyl-sn-glyceryl-L-cysteinyl-[lipoprotein] + a glycerophospholipid = N-acyl-S-1,2-diacyl-sn-glyceryl-L-cysteinyl-[lipoprotein] + a 2-acyl-sn-glycero-3-phospholipid + H(+). Its pathway is protein modification; lipoprotein biosynthesis (N-acyl transfer). Catalyzes the phospholipid dependent N-acylation of the N-terminal cysteine of apolipoprotein, the last step in lipoprotein maturation. This Brucella melitensis biotype 1 (strain ATCC 23456 / CCUG 17765 / NCTC 10094 / 16M) protein is Apolipoprotein N-acyltransferase.